Consider the following 317-residue polypeptide: Protein IMPACT-B (317 aa).

Residues 17 to 118 (EEIEALSSIY…EKIREFLTEK (102 aa)) enclose the RWD domain. A disordered region spans residues 296–317 (DSTEETSKAGGKSKKPKSKKTK). Residues 306-317 (GKSKKPKSKKTK) show a composition bias toward basic residues.

This sequence belongs to the IMPACT family. In terms of assembly, interacts with GCN1; prevents the interaction of GCN1 with EIF2AK4/GCN2 and inhibits EIF2AK4/GCN2 kinase activity. Interaction with RPL39; this interaction occurs in a GCN1-independent manner. Associates with ribosomes; this interaction occurs in a GCN1-independent manner. Associates with actin; this interaction occurs in a GCN1-independent manner.

The protein resides in the cytoplasm. In terms of biological role, translational regulator that ensures constant high levels of translation upon a variety of stress conditions, such as amino acid starvation, UV-C irradiation, proteasome inhibitor treatment and glucose deprivation. Plays a role as a negative regulator of the EIF2AK4/GCN2 kinase activity; impairs GCN1-mediated EIF2AK4/GCN2 activation, and hence EIF2AK4/GCN2-mediated eIF-2-alpha phosphorylation and subsequent down-regulation of protein synthesis. Plays a role in differentiation of neuronal cells by stimulating neurite outgrowth. This chain is Protein IMPACT-B (impact-B), found in Xenopus tropicalis (Western clawed frog).